A 1166-amino-acid chain; its full sequence is Tectonin beta-propeller repeat-containing protein 1 (1166 aa).

TECPR repeat units follow at residues 209 to 240 (LSVW…SLVE), 254 to 285 (DLIW…SMVE), 301 to 332 (SVVW…IEMV), and 344 to 376 (DQVW…KAIV). Phosphoserine is present on residues Ser-386, Ser-388, Ser-391, Ser-413, and Ser-418. The disordered stretch occupies residues 404-496 (RGSGTESAPS…PAELPWTNID (93 aa)). Residues 407–416 (GTESAPSDTD) are compositionally biased toward polar residues. The span at 451–462 (TSGNTDHSTENA) shows a compositional bias: polar residues. The span at 466-481 (EGKEKAPETSRSDECR) shows a compositional bias: basic and acidic residues. The PH domain maps to 616–722 (KTGALQWWCD…WLALLSLSCC (107 aa)). The stretch at 734-761 (QAIWSVTCKGDIFVSEPSPDLEARERLL) is one TECPR 5 repeat. At Ser-943 the chain carries Phosphoserine. TECPR repeat units lie at residues 958–989 (VALW…LHVG), 1003–1034 (YQVW…YHIP), 1049–1080 (TSVY…EHVS), and 1092–1132 (DQVW…DYGI).

The protein belongs to the TECPR1 family. In terms of assembly, interacts with ATG5; the interaction is direct. Interacts with WIPI2. Interacts with the ATG5-ATG12 conjugate, the interaction is however mutually exclusive with ATG16, since it does not interact with ATG12-ATG5-ATG16 complex.

The protein localises to the cytoplasmic vesicle. Its subcellular location is the autophagosome membrane. The protein resides in the lysosome membrane. Tethering factor involved in autophagy. Involved in autophagosome maturation by promoting the autophagosome fusion with lysosomes: acts by associating with both the ATG5-ATG12 conjugate and phosphatidylinositol-3-phosphate (PtdIns(3)P) present at the surface of autophagosomes. Also involved in selective autophagy against bacterial pathogens, by being required for phagophore/preautophagosomal structure biogenesis and maturation. This chain is Tectonin beta-propeller repeat-containing protein 1 (Tecpr1), found in Mus musculus (Mouse).